A 212-amino-acid polypeptide reads, in one-letter code: Thymidylate kinase (212 aa).

10–17 is a binding site for ATP; sequence GLDGAGKT.

Belongs to the thymidylate kinase family.

It carries out the reaction dTMP + ATP = dTDP + ADP. In terms of biological role, phosphorylation of dTMP to form dTDP in both de novo and salvage pathways of dTTP synthesis. The protein is Thymidylate kinase of Blochmanniella pennsylvanica (strain BPEN).